The primary structure comprises 321 residues: Methionyl-tRNA formyltransferase (321 aa).

A (6S)-5,6,7,8-tetrahydrofolate-binding site is contributed by 113–116; that stretch reads SILP.

Belongs to the Fmt family.

The catalysed reaction is L-methionyl-tRNA(fMet) + (6R)-10-formyltetrahydrofolate = N-formyl-L-methionyl-tRNA(fMet) + (6S)-5,6,7,8-tetrahydrofolate + H(+). Functionally, attaches a formyl group to the free amino group of methionyl-tRNA(fMet). The formyl group appears to play a dual role in the initiator identity of N-formylmethionyl-tRNA by promoting its recognition by IF2 and preventing the misappropriation of this tRNA by the elongation apparatus. The protein is Methionyl-tRNA formyltransferase of Pseudoalteromonas translucida (strain TAC 125).